A 65-amino-acid polypeptide reads, in one-letter code: Large ribosomal subunit protein bL35 (65 aa).

This sequence belongs to the bacterial ribosomal protein bL35 family.

The chain is Large ribosomal subunit protein bL35 from Phytoplasma australiense.